Reading from the N-terminus, the 329-residue chain is Beta-ketoacyl-[acyl-carrier-protein] synthase III (329 aa).

Catalysis depends on residues C114 and H255. Residues 256–260 are ACP-binding; it reads QANQR. The active site involves N285.

It belongs to the thiolase-like superfamily. FabH family. Homodimer.

The protein localises to the cytoplasm. It carries out the reaction malonyl-[ACP] + acetyl-CoA + H(+) = 3-oxobutanoyl-[ACP] + CO2 + CoA. It participates in lipid metabolism; fatty acid biosynthesis. Catalyzes the condensation reaction of fatty acid synthesis by the addition to an acyl acceptor of two carbons from malonyl-ACP. Catalyzes the first condensation reaction which initiates fatty acid synthesis and may therefore play a role in governing the total rate of fatty acid production. Possesses both acetoacetyl-ACP synthase and acetyl transacylase activities. Its substrate specificity determines the biosynthesis of branched-chain and/or straight-chain of fatty acids. The protein is Beta-ketoacyl-[acyl-carrier-protein] synthase III of Trichodesmium erythraeum (strain IMS101).